A 298-amino-acid polypeptide reads, in one-letter code: Junctional adhesion molecule B (298 aa).

A signal peptide spans 1–28 (MARRSRHRLLLLLLRYLVVALGYHKAYG). The Extracellular segment spans residues 29–238 (FSAPKDQQVV…RMQVDDLNIS (210 aa)). An Ig-like V-type domain is found at 32-127 (PKDQQVVTAV…GQNLEEDTVT (96 aa)). 2 disulfide bridges follow: Cys-50–Cys-109 and Cys-155–Cys-214. Asn-98, Asn-187, and Asn-236 each carry an N-linked (GlcNAc...) asparagine glycan. The Ig-like C2-type domain maps to 134-238 (PAVPSCEVPS…RMQVDDLNIS (105 aa)). A helical membrane pass occupies residues 239–259 (GIIAAVVVVALVISVCGLGVC). Residues 260–298 (YAQRKGYFSKETSFQKSNSSSKATTMSENDFKHTKSFII) lie on the Cytoplasmic side of the membrane.

The protein belongs to the immunoglobulin superfamily. Highly expressed in heart, placenta, lung, foreskin and lymph node. Prominently expressed on high endothelial venules and also present on the endothelia of other vessels (at protein level). Also expressed in the brain in the caudate nuclei.

The protein resides in the cell membrane. It is found in the cell junction. It localises to the tight junction. Its function is as follows. Junctional adhesion protein that mediates heterotypic cell-cell interactions with its cognate receptor JAM3 to regulate different cellular processes. Plays a role in homing and mobilization of hematopoietic stem and progenitor cells within the bone marrow. At the surface of bone marrow stromal cells, it contributes to the retention of the hematopoietic stem and progenitor cells expressing JAM3. Plays a central role in leukocytes extravasation by facilitating not only transmigration but also tethering and rolling of leukocytes along the endothelium. Tethering and rolling of leukocytes are dependent on the binding by JAM2 of the integrin alpha-4/beta-1. Plays a role in spermatogenesis where JAM2 and JAM3, which are respectively expressed by Sertoli and germ cells, mediate an interaction between both cell types and play an essential role in the anchorage of germ cells onto Sertoli cells and the assembly of cell polarity complexes during spermatid differentiation. Also functions as an inhibitory somatodendritic cue that prevents the myelination of non-axonal parts of neurons. During myogenesis, it is involved in myocyte fusion. May also play a role in angiogenesis. This Homo sapiens (Human) protein is Junctional adhesion molecule B.